Consider the following 328-residue polypeptide: MSMANFTAGRNSCTFQEEFKQVLLPLVYSVVFLLGLPLNAVVIGQIWLARKALTRTTIYMLNLATADLLYVCSLPLLIYNYTQKDYWPFGDFTCKFVRFQFYTNLHGSILFLTCISVQRYMGICHPLASWHKKKGKKLTWLVCAAVWFIVIAQCLPTFVFASTGTQRNRTVCYDLSPPDRSASYFPYGITLTITGFLLPFAAILACYCSMARILCQKDELIGLAVHKKKDKAVRMIIIVVIVFSISFFPFHLTKTIYLIVRSSPTLPCPTLQAFAIAYKCTRPFASMNSVLDPILFYFTQRKFRESTRYLLDKMSSKWRHDHCITYGS.

The Extracellular segment spans residues 1–22 (MSMANFTAGRNSCTFQEEFKQV). Asn5 is a glycosylation site (N-linked (GlcNAc...) asparagine). A helical membrane pass occupies residues 23-43 (LLPLVYSVVFLLGLPLNAVVI). Over 44-57 (GQIWLARKALTRTT) the chain is Cytoplasmic. A helical membrane pass occupies residues 58 to 78 (IYMLNLATADLLYVCSLPLLI). Over 79 to 96 (YNYTQKDYWPFGDFTCKF) the chain is Extracellular. Cysteines 94 and 172 form a disulfide. Residues 97 to 117 (VRFQFYTNLHGSILFLTCISV) form a helical membrane-spanning segment. The Cytoplasmic portion of the chain corresponds to 118–139 (QRYMGICHPLASWHKKKGKKLT). The chain crosses the membrane as a helical span at residues 140 to 160 (WLVCAAVWFIVIAQCLPTFVF). The Extracellular portion of the chain corresponds to 161 to 189 (ASTGTQRNRTVCYDLSPPDRSASYFPYGI). Residues 190-210 (TLTITGFLLPFAAILACYCSM) traverse the membrane as a helical segment. Residues 211–231 (ARILCQKDELIGLAVHKKKDK) are Cytoplasmic-facing. Residues 232–252 (AVRMIIIVVIVFSISFFPFHL) traverse the membrane as a helical segment. The Extracellular portion of the chain corresponds to 253-275 (TKTIYLIVRSSPTLPCPTLQAFA). Residues 276–298 (IAYKCTRPFASMNSVLDPILFYF) traverse the membrane as a helical segment. Over 299–323 (TQRKFRESTRYLLDKMSSKWRHDHC) the chain is Cytoplasmic.

It belongs to the G-protein coupled receptor 1 family.

It is found in the cell membrane. Its function is as follows. Receptor for extracellular UDP &gt; ADP = UTP. The activity of this receptor is mediated by G proteins which activate a phosphatidylinositol-calcium second messenger system. The polypeptide is P2Y purinoceptor 3 (P2RY3) (Meleagris gallopavo (Wild turkey)).